A 74-amino-acid chain; its full sequence is Exodeoxyribonuclease 7 small subunit (74 aa).

It belongs to the XseB family. As to quaternary structure, heterooligomer composed of large and small subunits.

It localises to the cytoplasm. It catalyses the reaction Exonucleolytic cleavage in either 5'- to 3'- or 3'- to 5'-direction to yield nucleoside 5'-phosphates.. In terms of biological role, bidirectionally degrades single-stranded DNA into large acid-insoluble oligonucleotides, which are then degraded further into small acid-soluble oligonucleotides. This Neisseria gonorrhoeae (strain ATCC 700825 / FA 1090) protein is Exodeoxyribonuclease 7 small subunit.